The chain runs to 89 residues: MYLDSAKKQELFEKYGKSATNTGSAESQIALFTFRISHLTEHLKVNHKDYATERSLKMLVGKRRRLLDYLIKTDIERYRAIIKELGIRK.

This sequence belongs to the universal ribosomal protein uS15 family. As to quaternary structure, part of the 30S ribosomal subunit. Forms a bridge to the 50S subunit in the 70S ribosome, contacting the 23S rRNA.

One of the primary rRNA binding proteins, it binds directly to 16S rRNA where it helps nucleate assembly of the platform of the 30S subunit by binding and bridging several RNA helices of the 16S rRNA. In terms of biological role, forms an intersubunit bridge (bridge B4) with the 23S rRNA of the 50S subunit in the ribosome. In Parabacteroides distasonis (strain ATCC 8503 / DSM 20701 / CIP 104284 / JCM 5825 / NCTC 11152), this protein is Small ribosomal subunit protein uS15.